The chain runs to 225 residues: ATP-dependent dethiobiotin synthetase BioD (225 aa).

An ATP-binding site is contributed by 13 to 18 (NVGKTL). Residue Thr-17 coordinates Mg(2+). Lys-38 is a catalytic residue. Thr-42 is a binding site for substrate. Residues Asp-55, 116 to 119 (EGAG), 176 to 177 (NH), and 205 to 207 (PWL) each bind ATP. Residues Asp-55 and Glu-116 each contribute to the Mg(2+) site.

Belongs to the dethiobiotin synthetase family. In terms of assembly, homodimer. Mg(2+) is required as a cofactor.

Its subcellular location is the cytoplasm. It carries out the reaction (7R,8S)-7,8-diammoniononanoate + CO2 + ATP = (4R,5S)-dethiobiotin + ADP + phosphate + 3 H(+). It participates in cofactor biosynthesis; biotin biosynthesis; biotin from 7,8-diaminononanoate: step 1/2. Catalyzes a mechanistically unusual reaction, the ATP-dependent insertion of CO2 between the N7 and N8 nitrogen atoms of 7,8-diaminopelargonic acid (DAPA, also called 7,8-diammoniononanoate) to form a ureido ring. The chain is ATP-dependent dethiobiotin synthetase BioD from Baumannia cicadellinicola subsp. Homalodisca coagulata.